A 522-amino-acid polypeptide reads, in one-letter code: MKKIMLIASAMSALSLPFSASAIELGDEGVLECGPYAKIGVVGGMVTGVESARLDPADVDCKKHLSLTTMLPFGGTLAAGMTIAPGFRAELGVMYLRNINAEVELGEGKTGSGAANAAIDTGAPIRKRFKLTPPQPTIMPISIADRDLGVDTDILAQAAVGQQQLTVEQRAEDRIAWLKNYAGIDYMVPDSQNPNARVVNPVLLNITQGAPNVNPRPRQNLNILDHDQWRYLVVGVTALSNANKPSVSSVKVLSDKITQIYSDIRQFAKIANIEVPGAPLPNSASVEQIQTKMQELNDVLEELRESFDGYLANAFANQIQLNFQIQQAQQQQQQQQQGQVTAQEAAAAAAVRALNGNEQIIQLYKDLVKLQRHAGIRKAMEKLAAQEEGDDQSQVSCNDKKQQAVAEDSKAGSSKEGKNKEVELDLSMIVAQVKLYADVVATESFSIYIGGGVGVARTYGDIDGKSVKHIGVVASGVLGVAINVADGVCVDIDGGYMHSFSKIEDKYSVNAFIANAGVRYNF.

The signal sequence occupies residues 1–22 (MKKIMLIASAMSALSLPFSASA). The helical transmembrane segment at 67–87 (LTTMLPFGGTLAAGMTIAPGF) threads the bilayer. The interval 385–417 (AQEEGDDQSQVSCNDKKQQAVAEDSKAGSSKEG) is disordered. A compositionally biased stretch (basic and acidic residues) spans 398 to 417 (NDKKQQAVAEDSKAGSSKEG). A helical membrane pass occupies residues 470 to 490 (IGVVASGVLGVAINVADGVCV).

The protein localises to the cell membrane. In terms of biological role, may be an adherent factor for rickettsial adsorption to the host-cell surface and a determinant of virulence of individual rickettsial strain. It is the major outer membrane protein. In Orientia tsutsugamushi (Rickettsia tsutsugamushi), this protein is 56 kDa type-specific antigen.